Here is a 450-residue protein sequence, read N- to C-terminus: Trigger factor (450 aa).

Positions 163 to 249 constitute a PPIase FKBP-type domain; it reads EDFVLIDYQG…LKEIQEQILP (87 aa). Residues 431–443 show a composition bias toward acidic residues; sequence PEVETEVSESAAD. The segment at 431 to 450 is disordered; it reads PEVETEVSESAADVEDKTDQ.

This sequence belongs to the FKBP-type PPIase family. Tig subfamily.

Its subcellular location is the cytoplasm. It catalyses the reaction [protein]-peptidylproline (omega=180) = [protein]-peptidylproline (omega=0). Its function is as follows. Involved in protein export. Acts as a chaperone by maintaining the newly synthesized protein in an open conformation. Functions as a peptidyl-prolyl cis-trans isomerase. In Desulforapulum autotrophicum (strain ATCC 43914 / DSM 3382 / VKM B-1955 / HRM2) (Desulfobacterium autotrophicum), this protein is Trigger factor.